A 131-amino-acid polypeptide reads, in one-letter code: Torsin-1A-interacting protein 2, isoform IFRG15 (131 aa).

The protein is Torsin-1A-interacting protein 2, isoform IFRG15 (Tor1aip2) of Mus musculus (Mouse).